A 341-amino-acid chain; its full sequence is Methionine import ATP-binding protein MetN 2 (341 aa).

Residues 2-241 enclose the ABC transporter domain; it reads ILLENVKKIY…PQQDITKRFV (240 aa). 38-45 is a binding site for ATP; sequence GYSGAGKS.

The protein belongs to the ABC transporter superfamily. Methionine importer (TC 3.A.1.24) family. In terms of assembly, the complex is composed of two ATP-binding proteins (MetN), two transmembrane proteins (MetI) and a solute-binding protein (MetQ).

Its subcellular location is the cell membrane. It carries out the reaction L-methionine(out) + ATP + H2O = L-methionine(in) + ADP + phosphate + H(+). It catalyses the reaction D-methionine(out) + ATP + H2O = D-methionine(in) + ADP + phosphate + H(+). Its function is as follows. Part of the ABC transporter complex MetNIQ involved in methionine import. Responsible for energy coupling to the transport system. This chain is Methionine import ATP-binding protein MetN 2, found in Bacillus thuringiensis subsp. konkukian (strain 97-27).